Here is a 294-residue protein sequence, read N- to C-terminus: Pyridoxal 5'-phosphate synthase subunit PdxS (294 aa).

Residue D24 participates in D-ribose 5-phosphate binding. Catalysis depends on K81, which acts as the Schiff-base intermediate with D-ribose 5-phosphate. Residue G153 participates in D-ribose 5-phosphate binding. R165 is a binding site for D-glyceraldehyde 3-phosphate. Residues G214 and 235–236 (GS) each bind D-ribose 5-phosphate.

The protein belongs to the PdxS/SNZ family. Homohexamer and homododecamer. In the presence of PdxT, forms a dodecamer of heterodimers.

The catalysed reaction is aldehydo-D-ribose 5-phosphate + D-glyceraldehyde 3-phosphate + L-glutamine = pyridoxal 5'-phosphate + L-glutamate + phosphate + 3 H2O + H(+). It functions in the pathway cofactor biosynthesis; pyridoxal 5'-phosphate biosynthesis. In terms of biological role, catalyzes the formation of pyridoxal 5'-phosphate from ribose 5-phosphate (RBP), glyceraldehyde 3-phosphate (G3P) and ammonia. The ammonia is provided by the PdxT subunit. Can also use ribulose 5-phosphate and dihydroxyacetone phosphate as substrates, resulting from enzyme-catalyzed isomerization of RBP and G3P, respectively. This is Pyridoxal 5'-phosphate synthase subunit PdxS from Geobacillus kaustophilus (strain HTA426).